Reading from the N-terminus, the 421-residue chain is Histidine--tRNA ligase (421 aa).

This sequence belongs to the class-II aminoacyl-tRNA synthetase family. In terms of assembly, homodimer.

Its subcellular location is the cytoplasm. It catalyses the reaction tRNA(His) + L-histidine + ATP = L-histidyl-tRNA(His) + AMP + diphosphate + H(+). The protein is Histidine--tRNA ligase of Coxiella burnetii (strain CbuK_Q154) (Coxiella burnetii (strain Q154)).